Reading from the N-terminus, the 425-residue chain is Enolase (425 aa).

Gln-162 provides a ligand contact to (2R)-2-phosphoglycerate. The active-site Proton donor is Glu-204. Positions 241, 282, and 309 each coordinate Mg(2+). Positions 334, 363, 364, and 385 each coordinate (2R)-2-phosphoglycerate. Lys-334 functions as the Proton acceptor in the catalytic mechanism.

This sequence belongs to the enolase family. Mg(2+) is required as a cofactor.

Its subcellular location is the cytoplasm. It localises to the secreted. It is found in the cell surface. The catalysed reaction is (2R)-2-phosphoglycerate = phosphoenolpyruvate + H2O. The protein operates within carbohydrate degradation; glycolysis; pyruvate from D-glyceraldehyde 3-phosphate: step 4/5. Catalyzes the reversible conversion of 2-phosphoglycerate (2-PG) into phosphoenolpyruvate (PEP). It is essential for the degradation of carbohydrates via glycolysis. In Micrococcus luteus (strain ATCC 4698 / DSM 20030 / JCM 1464 / CCM 169 / CCUG 5858 / IAM 1056 / NBRC 3333 / NCIMB 9278 / NCTC 2665 / VKM Ac-2230) (Micrococcus lysodeikticus), this protein is Enolase.